Reading from the N-terminus, the 245-residue chain is MNFPYRNIVVLTGAGISAESGIQTFRAQDGLWENHRIEDVATPEGFARDPDLVQDFYNQRRKKLQDPNIEPNAAHLALGRLEAELDGQVTIVTQNIDNLHERGGNKNIIHMHGELLKSRCSVSNQVIEETGDILTGDLCHCCQMPSQMRPHVVWFGEMPLRMGEIYSALETADLFISIGTSGVVYPAAGFVHDAKMHGAHTIEINLEPSAIESEFVEKRYGKASVEVPKLVEELLAHLESNVESA.

Residues 1–237 (MNFPYRNIVV…PKLVEELLAH (237 aa)) enclose the Deacetylase sirtuin-type domain. 13–32 (GAGISAESGIQTFRAQDGLW) is an NAD(+) binding site. Substrate-binding residues include Tyr-57 and Arg-60. 94–97 (QNID) lines the NAD(+) pocket. His-112 functions as the Proton acceptor in the catalytic mechanism. Zn(2+) contacts are provided by Cys-120 and Cys-139. Residues 179-181 (GTS), 205-207 (NLE), and Ala-223 each bind NAD(+).

Belongs to the sirtuin family. Class III subfamily. The cofactor is Zn(2+).

Its subcellular location is the cytoplasm. It carries out the reaction N(6)-acetyl-L-lysyl-[protein] + NAD(+) + H2O = 2''-O-acetyl-ADP-D-ribose + nicotinamide + L-lysyl-[protein]. The catalysed reaction is N(6)-succinyl-L-lysyl-[protein] + NAD(+) + H2O = 2''-O-succinyl-ADP-D-ribose + nicotinamide + L-lysyl-[protein]. Functionally, NAD-dependent lysine deacetylase and desuccinylase that specifically removes acetyl and succinyl groups on target proteins. Modulates the activities of several proteins which are inactive in their acylated form. This chain is NAD-dependent protein deacylase, found in Vibrio vulnificus (strain CMCP6).